The following is a 564-amino-acid chain: Proline--tRNA ligase (564 aa).

It belongs to the class-II aminoacyl-tRNA synthetase family. ProS type 1 subfamily. As to quaternary structure, homodimer.

It is found in the cytoplasm. It catalyses the reaction tRNA(Pro) + L-proline + ATP = L-prolyl-tRNA(Pro) + AMP + diphosphate. Its function is as follows. Catalyzes the attachment of proline to tRNA(Pro) in a two-step reaction: proline is first activated by ATP to form Pro-AMP and then transferred to the acceptor end of tRNA(Pro). As ProRS can inadvertently accommodate and process non-cognate amino acids such as alanine and cysteine, to avoid such errors it has two additional distinct editing activities against alanine. One activity is designated as 'pretransfer' editing and involves the tRNA(Pro)-independent hydrolysis of activated Ala-AMP. The other activity is designated 'posttransfer' editing and involves deacylation of mischarged Ala-tRNA(Pro). The misacylated Cys-tRNA(Pro) is not edited by ProRS. The protein is Proline--tRNA ligase of Xanthomonas oryzae pv. oryzae (strain KACC10331 / KXO85).